The primary structure comprises 401 residues: 1-deoxy-D-xylulose 5-phosphate reductoisomerase (401 aa).

NADPH contacts are provided by Thr11, Gly12, Ser13, Ile14, Arg38, Asn39, and Asn125. Lys126 is a binding site for 1-deoxy-D-xylulose 5-phosphate. An NADPH-binding site is contributed by Glu127. Asp151 contributes to the Mn(2+) binding site. Ser152, Glu153, Ser179, and His202 together coordinate 1-deoxy-D-xylulose 5-phosphate. Glu153 is a Mn(2+) binding site. Gly208 is an NADPH binding site. The 1-deoxy-D-xylulose 5-phosphate site is built by Ser215, Asn220, Lys221, and Glu224. Glu224 is a Mn(2+) binding site.

The protein belongs to the DXR family. Mg(2+) is required as a cofactor. Mn(2+) serves as cofactor.

The catalysed reaction is 2-C-methyl-D-erythritol 4-phosphate + NADP(+) = 1-deoxy-D-xylulose 5-phosphate + NADPH + H(+). It functions in the pathway isoprenoid biosynthesis; isopentenyl diphosphate biosynthesis via DXP pathway; isopentenyl diphosphate from 1-deoxy-D-xylulose 5-phosphate: step 1/6. Catalyzes the NADPH-dependent rearrangement and reduction of 1-deoxy-D-xylulose-5-phosphate (DXP) to 2-C-methyl-D-erythritol 4-phosphate (MEP). This chain is 1-deoxy-D-xylulose 5-phosphate reductoisomerase, found in Paraburkholderia phytofirmans (strain DSM 17436 / LMG 22146 / PsJN) (Burkholderia phytofirmans).